A 215-amino-acid chain; its full sequence is Peptide methionine sulfoxide reductase MsrA (215 aa).

Cysteine 58 is a catalytic residue.

The protein belongs to the MsrA Met sulfoxide reductase family.

The catalysed reaction is L-methionyl-[protein] + [thioredoxin]-disulfide + H2O = L-methionyl-(S)-S-oxide-[protein] + [thioredoxin]-dithiol. The enzyme catalyses [thioredoxin]-disulfide + L-methionine + H2O = L-methionine (S)-S-oxide + [thioredoxin]-dithiol. In terms of biological role, has an important function as a repair enzyme for proteins that have been inactivated by oxidation. Catalyzes the reversible oxidation-reduction of methionine sulfoxide in proteins to methionine. The polypeptide is Peptide methionine sulfoxide reductase MsrA (Pseudomonas savastanoi pv. phaseolicola (strain 1448A / Race 6) (Pseudomonas syringae pv. phaseolicola (strain 1448A / Race 6))).